The following is a 418-amino-acid chain: F-box/kelch-repeat protein SKIP20 (418 aa).

The F-box domain occupies 14 to 61 (DLIPGLPEELAIECLVRVPFQFHSSIKSVCRSWKCVISSRSFIKERIG). The segment at 79 to 104 (PSPAMMEGGEMSQKKKEEEEGESQMT) is disordered. 4 Kelch repeats span residues 104-150 (TQQL…AIQD), 153-206 (KVLL…SVGS), 208-255 (KVYV…SMAT), and 258-314 (GFCV…EFPG).

As to quaternary structure, part of a SCF (ASK-cullin-F-box) protein ligase complex. Interacts with SKP1A/ASK1 and SPK1B/ASK2.

It localises to the nucleus. It functions in the pathway protein modification; protein ubiquitination. Functionally, component of SCF(ASK-cullin-F-box) E3 ubiquitin ligase complexes, which may mediate the ubiquitination and subsequent proteasomal degradation of target proteins. This Arabidopsis thaliana (Mouse-ear cress) protein is F-box/kelch-repeat protein SKIP20 (SKIP20).